Here is a 310-residue protein sequence, read N- to C-terminus: Ribosomal protein uL3 glutamine methyltransferase (310 aa).

The protein belongs to the protein N5-glutamine methyltransferase family. PrmB subfamily.

The catalysed reaction is L-glutaminyl-[ribosomal protein uL3] + S-adenosyl-L-methionine = N(5)-methyl-L-glutaminyl-[ribosomal protein uL3] + S-adenosyl-L-homocysteine + H(+). Its function is as follows. Specifically methylates large ribosomal subunit protein uL3 on 'Gln-150'. In Shigella dysenteriae serotype 1 (strain Sd197), this protein is Ribosomal protein uL3 glutamine methyltransferase.